Reading from the N-terminus, the 273-residue chain is Pantothenate synthetase (273 aa).

27-34 (MGALHDGH) serves as a coordination point for ATP. His34 (proton donor) is an active-site residue. Residue Gln58 participates in (R)-pantoate binding. Gln58 is a beta-alanine binding site. Position 144-147 (144-147 (GKKD)) interacts with ATP. Residue Gln150 coordinates (R)-pantoate. ATP-binding positions include Val173 and 181–184 (LSSR).

Belongs to the pantothenate synthetase family. As to quaternary structure, homodimer.

It localises to the cytoplasm. The catalysed reaction is (R)-pantoate + beta-alanine + ATP = (R)-pantothenate + AMP + diphosphate + H(+). It participates in cofactor biosynthesis; (R)-pantothenate biosynthesis; (R)-pantothenate from (R)-pantoate and beta-alanine: step 1/1. Its function is as follows. Catalyzes the condensation of pantoate with beta-alanine in an ATP-dependent reaction via a pantoyl-adenylate intermediate. This Campylobacter concisus (strain 13826) protein is Pantothenate synthetase.